The following is a 647-amino-acid chain: MASYKQNLPPSALIKQQVNVADKKSKAEVQRDRQLEEDRKAGTAPAMVDVQTGRDINPHIPMFISQNPWYVPSEGPTLKHQRPHEEREKKMTQIHEWYQKGTTGKSATKFRKGACENCGAMGHQKRDCFDRPRKSNAKETNDNIAEDDYVQPNLTLGFDAKRDRWNGYDPSTHKQVIEDYEHLEEARKVVREHEMKEGEVEPATTEDGAPKDEDMYAEDADMAGVSVDMDSRTRITVRNLRIREDTAKYLYNLAENSPYYDPKSRSMRENPFAGVAGKELEAARFSGDNFVRYSGEVTAANEAQVFAWQATRGGVYAHSIAEPTKLEALKKEYEKEKSTLKNETQKELLDKYGGGEHMERPADELLLAQTESYIEYNRKGKVIKGKEKVAISSRFKEDIYPQNHTSVFGSFWREGRWGYKCCHQFVKNSYCTGKQGIEAETSAAKGTTTSNEEIFKVPKLVEKTEVKEEKEKEDSIKDEVAEENSDNDNDEEKEKVSEKSISPSPPSDDEEKEKEREKERLIEKERRERDQRRRDKKREKRERKKAKLGKRKRRHRDSDDESDPSSGSGSESDSDEEMRKAMKKAKREKAEGMKAAREGDRGRKYNTDYSNTAPNEKEMEAYRVTSVHSADPMAAYMNSKFEKKHTK.

A compositionally biased stretch (polar residues) spans 1–19; sequence MASYKQNLPPSALIKQQVN. The disordered stretch occupies residues 1 to 44; it reads MASYKQNLPPSALIKQQVNVADKKSKAEVQRDRQLEEDRKAGTA. Basic and acidic residues predominate over residues 21-41; it reads ADKKSKAEVQRDRQLEEDRKA. The CCHC-type zinc finger occupies 113-130; sequence GACENCGAMGHQKRDCFD. Disordered stretches follow at residues 193-212 and 465-620; these read HEMK…APKD and EVKE…KEME. The segment covering 465-479 has biased composition (basic and acidic residues); it reads EVKEEKEKEDSIKDE. The segment covering 480-491 has biased composition (acidic residues); that stretch reads VAEENSDNDNDE. The span at 513-533 shows a compositional bias: basic and acidic residues; it reads EKEREKERLIEKERRERDQRR. Residues 534-555 are compositionally biased toward basic residues; the sequence is RDKKREKRERKKAKLGKRKRRH. The segment covering 588-606 has biased composition (basic and acidic residues); the sequence is EKAEGMKAAREGDRGRKYN.

It belongs to the SLU7 family.

The protein localises to the nucleus. Functionally, participates in the second catalytic step of pre-mRNA splicing, when the free hydroxyl group of exon I attacks the 3'-splice site to generate spliced mRNA and the excised lariat intron. In Caenorhabditis elegans, this protein is Pre-mRNA-splicing factor SLU7.